The sequence spans 142 residues: Large ribosomal subunit protein bL17 (142 aa).

Belongs to the bacterial ribosomal protein bL17 family. In terms of assembly, part of the 50S ribosomal subunit. Contacts protein L32.

The polypeptide is Large ribosomal subunit protein bL17 (Chlamydia caviae (strain ATCC VR-813 / DSM 19441 / 03DC25 / GPIC) (Chlamydophila caviae)).